Consider the following 133-residue polypeptide: Small ribosomal subunit protein uS8 (133 aa).

Belongs to the universal ribosomal protein uS8 family. Part of the 30S ribosomal subunit.

One of the primary rRNA binding proteins, it binds directly to 16S rRNA central domain where it helps coordinate assembly of the platform of the 30S subunit. This chain is Small ribosomal subunit protein uS8, found in Aeropyrum pernix (strain ATCC 700893 / DSM 11879 / JCM 9820 / NBRC 100138 / K1).